A 201-amino-acid polypeptide reads, in one-letter code: Small ribosomal subunit protein uS4c (201 aa).

The tract at residues 15–43 is disordered; sequence LGALPGLTSKRPRPGSDLRNQSRSGKRSQ. Residues 89–150 form the S4 RNA-binding domain; it reads MRLDNILFRL…EQRSRALIQN (62 aa).

It belongs to the universal ribosomal protein uS4 family. Part of the 30S ribosomal subunit. Contacts protein S5. The interaction surface between S4 and S5 is involved in control of translational fidelity.

Its subcellular location is the plastid. The protein localises to the chloroplast. In terms of biological role, one of the primary rRNA binding proteins, it binds directly to 16S rRNA where it nucleates assembly of the body of the 30S subunit. Functionally, with S5 and S12 plays an important role in translational accuracy. The protein is Small ribosomal subunit protein uS4c (rps4) of Liriodendron tulipifera (Tuliptree).